We begin with the raw amino-acid sequence, 200 residues long: ATP-dependent Clp protease proteolytic subunit (200 aa).

The active-site Nucleophile is the serine 97. Histidine 122 is a catalytic residue.

It belongs to the peptidase S14 family. In terms of assembly, fourteen ClpP subunits assemble into 2 heptameric rings which stack back to back to give a disk-like structure with a central cavity, resembling the structure of eukaryotic proteasomes.

The protein localises to the cytoplasm. The catalysed reaction is Hydrolysis of proteins to small peptides in the presence of ATP and magnesium. alpha-casein is the usual test substrate. In the absence of ATP, only oligopeptides shorter than five residues are hydrolyzed (such as succinyl-Leu-Tyr-|-NHMec, and Leu-Tyr-Leu-|-Tyr-Trp, in which cleavage of the -Tyr-|-Leu- and -Tyr-|-Trp bonds also occurs).. Its function is as follows. Cleaves peptides in various proteins in a process that requires ATP hydrolysis. Has a chymotrypsin-like activity. Plays a major role in the degradation of misfolded proteins. In Oleidesulfovibrio alaskensis (strain ATCC BAA-1058 / DSM 17464 / G20) (Desulfovibrio alaskensis), this protein is ATP-dependent Clp protease proteolytic subunit.